The sequence spans 132 residues: Small ribosomal subunit protein uS8 (132 aa).

It belongs to the universal ribosomal protein uS8 family. Part of the 30S ribosomal subunit. Contacts proteins S5 and S12.

In terms of biological role, one of the primary rRNA binding proteins, it binds directly to 16S rRNA central domain where it helps coordinate assembly of the platform of the 30S subunit. In Shouchella clausii (strain KSM-K16) (Alkalihalobacillus clausii), this protein is Small ribosomal subunit protein uS8.